An 852-amino-acid chain; its full sequence is Probable LRR receptor-like serine/threonine-protein kinase At1g05700 (852 aa).

The signal sequence occupies residues 1–25; the sequence is MEEFRFLYLIYSAAFALCLVVSVLA. Residues 26–510 are Extracellular-facing; it reads QDQSGFISID…SCRKSNSKKL (485 aa). N-linked (GlcNAc...) asparagine glycosylation is found at Asn-138, Asn-182, Asn-231, Asn-240, Asn-258, Asn-293, Asn-400, Asn-415, and Asn-431. LRR repeat units lie at residues 410-432, 434-457, and 458-479; these read RITS…FSNL, MIQE…SKLK, and FLRV…ELLE. Asn-466 is a glycosylation site (N-linked (GlcNAc...) asparagine). The chain crosses the membrane as a helical span at residues 511-531; that stretch reads VIPLVASFAALFILLLLSGVF. Topologically, residues 532-852 are cytoplasmic; sequence WRIRNRRNKS…LQREESNKNY (321 aa). The residue at position 561 (Thr-561) is a Phosphothreonine. The Protein kinase domain maps to 570–843; sequence NNFGQVLGKG…HIVRGLNECL (274 aa). ATP contacts are provided by residues 576–584 and Lys-597; that span reads LGKGGFGTV. Tyr-642 carries the post-translational modification Phosphotyrosine. Asp-693 acts as the Proton acceptor in catalysis. Ser-697 and Ser-727 each carry phosphoserine. Phosphothreonine occurs at positions 728 and 733.

Belongs to the protein kinase superfamily. Ser/Thr protein kinase family.

It is found in the membrane. The catalysed reaction is L-seryl-[protein] + ATP = O-phospho-L-seryl-[protein] + ADP + H(+). It carries out the reaction L-threonyl-[protein] + ATP = O-phospho-L-threonyl-[protein] + ADP + H(+). This Arabidopsis thaliana (Mouse-ear cress) protein is Probable LRR receptor-like serine/threonine-protein kinase At1g05700.